A 546-amino-acid polypeptide reads, in one-letter code: Cysteine desulfurase SufS (546 aa).

The N-terminal stretch at 1-22 (MLRGPRCLYIYLFFVFLPFSFC) is a signal peptide. N6-(pyridoxal phosphate)lysine is present on Lys291. The active-site Cysteine persulfide intermediate is Cys497.

Belongs to the class-V pyridoxal-phosphate-dependent aminotransferase family. Csd subfamily. As to quaternary structure, monomer. Interacts with SufE; interaction enhances cysteine desulfurase activity of SufS. Pyridoxal 5'-phosphate is required as a cofactor. In terms of processing, proteolytically cleaved.

Its subcellular location is the plastid. It is found in the apicoplast. It catalyses the reaction (sulfur carrier)-H + L-cysteine = (sulfur carrier)-SH + L-alanine. Its pathway is cofactor biosynthesis; iron-sulfur cluster biosynthesis. Its function is as follows. Catalyzes sulfur activation and mobilization in sulfur mobilization (SUF) pathway for iron-sulfur (Fe-S) cluster biogenesis. Active when in complex with a partner protein SufE. Required for apicoplast maintenance. Plays a role in the development of sporozoites in oocysts in mosquitoes. May provide sulfur for MNMA-mediated tRNA modifications. In Plasmodium falciparum (isolate 3D7), this protein is Cysteine desulfurase SufS.